The sequence spans 859 residues: Protein translocase subunit SecA (859 aa).

ATP contacts are provided by residues Gln88, Gly106–Thr110, and Asp496. Residues Phe818–Ser838 are disordered. Zn(2+) contacts are provided by Cys834, Cys836, Cys845, and Cys846.

Belongs to the SecA family. Monomer and homodimer. Part of the essential Sec protein translocation apparatus which comprises SecA, SecYEG and auxiliary proteins SecDF-YajC and YidC. The cofactor is Zn(2+).

It localises to the cell inner membrane. Its subcellular location is the cytoplasm. It carries out the reaction ATP + H2O + cellular proteinSide 1 = ADP + phosphate + cellular proteinSide 2.. Its function is as follows. Part of the Sec protein translocase complex. Interacts with the SecYEG preprotein conducting channel. Has a central role in coupling the hydrolysis of ATP to the transfer of proteins into and across the cell membrane, serving as an ATP-driven molecular motor driving the stepwise translocation of polypeptide chains across the membrane. This Wolinella succinogenes (strain ATCC 29543 / DSM 1740 / CCUG 13145 / JCM 31913 / LMG 7466 / NCTC 11488 / FDC 602W) (Vibrio succinogenes) protein is Protein translocase subunit SecA.